Here is a 451-residue protein sequence, read N- to C-terminus: ADP-specific phosphofructokinase (451 aa).

In terms of domain architecture, ADPK spans M1–R450. Mg(2+) contacts are provided by E261, E291, and D434. The active-site Proton acceptor is D434.

This sequence belongs to the carbohydrate kinase PfkC family. The cofactor is Mg(2+).

Its subcellular location is the cytoplasm. It carries out the reaction beta-D-fructose 6-phosphate + ADP = beta-D-fructose 1,6-bisphosphate + AMP + H(+). Its pathway is carbohydrate degradation; glycolysis. Functionally, catalyzes the phosphorylation of fructose 6-phosphate to fructose 1,6-bisphosphate using ADP as the phosphate donor. This Pyrococcus abyssi (strain GE5 / Orsay) protein is ADP-specific phosphofructokinase.